The primary structure comprises 94 residues: Pyrimidine/purine nucleoside phosphorylase (94 aa).

It belongs to the nucleoside phosphorylase PpnP family.

The enzyme catalyses a purine D-ribonucleoside + phosphate = a purine nucleobase + alpha-D-ribose 1-phosphate. The catalysed reaction is adenosine + phosphate = alpha-D-ribose 1-phosphate + adenine. It catalyses the reaction cytidine + phosphate = cytosine + alpha-D-ribose 1-phosphate. It carries out the reaction guanosine + phosphate = alpha-D-ribose 1-phosphate + guanine. The enzyme catalyses inosine + phosphate = alpha-D-ribose 1-phosphate + hypoxanthine. The catalysed reaction is thymidine + phosphate = 2-deoxy-alpha-D-ribose 1-phosphate + thymine. It catalyses the reaction uridine + phosphate = alpha-D-ribose 1-phosphate + uracil. It carries out the reaction xanthosine + phosphate = alpha-D-ribose 1-phosphate + xanthine. Its function is as follows. Catalyzes the phosphorolysis of diverse nucleosides, yielding D-ribose 1-phosphate and the respective free bases. Can use uridine, adenosine, guanosine, cytidine, thymidine, inosine and xanthosine as substrates. Also catalyzes the reverse reactions. The chain is Pyrimidine/purine nucleoside phosphorylase from Salmonella paratyphi C (strain RKS4594).